We begin with the raw amino-acid sequence, 1216 residues long: Regulator of telomere elongation helicase 1 (1216 aa).

The Helicase ATP-binding domain maps to K7–H295. S42–T49 is a binding site for ATP. C144, C162, C171, and C206 together coordinate [4Fe-4S] cluster. Positions K150 to V166 match the Nuclear localization signal motif. Residues D249 to H252 carry the DEAH box motif. Positions Q874–K880 match the Nuclear localization signal motif. 2 disordered regions span residues G978–Q1018 and G1140–Q1172. The PIP-box signature appears at Q1172 to L1179.

It belongs to the helicase family. RAD3/XPD subfamily. In terms of assembly, interacts with TERF1. Interacts (via PIP-box) with PCNA; the interaction is direct and essential for suppressing telomere fragility. Interacts with MMS19; the interaction mediates the association of RTEL1 with the cytosolic iron-sulfur protein assembly (CIA) complex. Highly expressed in adult testis, liver and ovary.

It localises to the nucleus. It catalyses the reaction ATP + H2O = ADP + phosphate + H(+). A probable ATP-dependent DNA helicase implicated in telomere-length regulation, DNA repair and the maintenance of genomic stability. Acts as an anti-recombinase to counteract toxic recombination and limit crossover during meiosis. Regulates meiotic recombination and crossover homeostasis by physically dissociating strand invasion events and thereby promotes noncrossover repair by meiotic synthesis dependent strand annealing (SDSA) as well as disassembly of D loop recombination intermediates. Also disassembles T loops and prevents telomere fragility by counteracting telomeric G4-DNA structures, which together ensure the dynamics and stability of the telomere. This chain is Regulator of telomere elongation helicase 1, found in Bos taurus (Bovine).